A 169-amino-acid chain; its full sequence is NADH-quinone oxidoreductase subunit B (169 aa).

4 residues coordinate [4Fe-4S] cluster: cysteine 42, cysteine 43, cysteine 107, and cysteine 136.

The protein belongs to the complex I 20 kDa subunit family. In terms of assembly, NDH-1 is composed of 14 different subunits. Subunits NuoB, C, D, E, F, and G constitute the peripheral sector of the complex. The cofactor is [4Fe-4S] cluster.

The protein resides in the cell inner membrane. It catalyses the reaction a quinone + NADH + 5 H(+)(in) = a quinol + NAD(+) + 4 H(+)(out). NDH-1 shuttles electrons from NADH, via FMN and iron-sulfur (Fe-S) centers, to quinones in the respiratory chain. The immediate electron acceptor for the enzyme in this species is believed to be ubiquinone. Couples the redox reaction to proton translocation (for every two electrons transferred, four hydrogen ions are translocated across the cytoplasmic membrane), and thus conserves the redox energy in a proton gradient. The sequence is that of NADH-quinone oxidoreductase subunit B from Helicobacter hepaticus (strain ATCC 51449 / 3B1).